Here is a 250-residue protein sequence, read N- to C-terminus: Small ribosomal subunit protein uS3 (250 aa).

Residues 39–107 (VRAALKKRLY…EVHLNIVEIR (69 aa)) enclose the KH type-2 domain. A disordered region spans residues 215 to 250 (LDKRLATESGPAGEGGGRERGDRPDRGDRRDRRDRA). Over residues 230 to 250 (GGRERGDRPDRGDRRDRRDRA) the composition is skewed to basic and acidic residues.

Belongs to the universal ribosomal protein uS3 family. Part of the 30S ribosomal subunit. Forms a tight complex with proteins S10 and S14.

Functionally, binds the lower part of the 30S subunit head. Binds mRNA in the 70S ribosome, positioning it for translation. The protein is Small ribosomal subunit protein uS3 of Caulobacter vibrioides (strain ATCC 19089 / CIP 103742 / CB 15) (Caulobacter crescentus).